Here is a 156-residue protein sequence, read N- to C-terminus: Small ribosomal subunit protein uS7 (156 aa).

The protein belongs to the universal ribosomal protein uS7 family. In terms of assembly, part of the 30S ribosomal subunit. Contacts proteins S9 and S11.

In terms of biological role, one of the primary rRNA binding proteins, it binds directly to 16S rRNA where it nucleates assembly of the head domain of the 30S subunit. Is located at the subunit interface close to the decoding center, probably blocks exit of the E-site tRNA. In Paenarthrobacter aurescens (strain TC1), this protein is Small ribosomal subunit protein uS7.